A 329-amino-acid chain; its full sequence is Phosphate import ATP-binding protein PstB (329 aa).

One can recognise an ABC transporter domain in the interval 83-325; the sequence is FEIRNFNFWY…PKQKATNSYI (243 aa). 116 to 123 contacts ATP; the sequence is GKSGCGKS.

Belongs to the ABC transporter superfamily. Phosphate importer (TC 3.A.1.7) family. As to quaternary structure, the complex is composed of two ATP-binding proteins (PstB), two transmembrane proteins (PstC and PstA) and a solute-binding protein (PstS).

Its subcellular location is the cell membrane. The enzyme catalyses phosphate(out) + ATP + H2O = ADP + 2 phosphate(in) + H(+). Part of the ABC transporter complex PstSACB involved in phosphate import. Responsible for energy coupling to the transport system. The chain is Phosphate import ATP-binding protein PstB from Mycoplasma genitalium (strain ATCC 33530 / DSM 19775 / NCTC 10195 / G37) (Mycoplasmoides genitalium).